Reading from the N-terminus, the 26-residue chain is L-amino-acid oxidase (26 aa).

It belongs to the flavin monoamine oxidase family. In terms of assembly, monomer. The cofactor is FAD. In terms of processing, not glycosylated. In terms of tissue distribution, expressed by the ink gland.

It is found in the secreted. The catalysed reaction is an L-alpha-amino acid + O2 + H2O = a 2-oxocarboxylate + H2O2 + NH4(+). In terms of biological role, catalyzes the oxidative deamination of positively charged L-amino acids L-Lys and L-Arg but not of amino acids L-His, L-Asp or L-Glu. Has antibacterial activity against the Gram-positive bacterium S.aureus (MIC=15 ug/ml). This antibacterial activity is bacteriostatic in the absence of amino acids L-Lys or L-Arg but bactericidal in their presence. The antibacterial effect is largely dependent on H(2)O(2) produced in the oxidative deamination of substrates. Has hemagglutinating activity towards rabbit erythrocytes. Hemagglutinating activity is inhibited by the glycoprotein fetuin, but not by glucose, mannose, galactose, N-acetylglucosamine, N-acetylgalactosamine or sialic acid. This Aplysia dactylomela (Spotted sea hare) protein is L-amino-acid oxidase.